We begin with the raw amino-acid sequence, 133 residues long: MGLTYQLIPALVCLLAFTSTFVHGQNFNNTLKEIIKTLNILTARNDSCMELTVMDVLAAPKNTSDKEIFCRATTVLRQIYTHHNCSTKFLKGLDRNLSSMANRTCSVNEVKKCTLKDFLERLKAIMQKKYSKH.

A signal peptide spans 1–24 (MGLTYQLIPALVCLLAFTSTFVHG). Residues Asn-28, Asn-45, Asn-62, Asn-84, Asn-96, and Asn-102 are each glycosylated (N-linked (GlcNAc...) asparagine). 2 disulfide bridges follow: Cys-48–Cys-85 and Cys-70–Cys-113.

Belongs to the IL-4/IL-13 family.

It is found in the secreted. In terms of biological role, participates in at least several B-cell activation processes as well as of other cell types. It is a costimulator of DNA-synthesis. It induces the expression of class II MHC molecules on resting B-cells. It enhances both secretion and cell surface expression of IgE and IgG1. It also regulates the expression of the low affinity Fc receptor for IgE (CD23) on both lymphocytes and monocytes. Positively regulates IL31RA expression in macrophages. Stimulates autophagy in dendritic cells by interfering with mTORC1 signaling and through the induction of RUFY4. The polypeptide is Interleukin-4 (IL4) (Felis catus (Cat)).